The following is a 392-amino-acid chain: DNA-directed RNA polymerase subunit Rpo1C (392 aa).

It belongs to the RNA polymerase beta' chain family. Part of the RNA polymerase complex.

It is found in the cytoplasm. The catalysed reaction is RNA(n) + a ribonucleoside 5'-triphosphate = RNA(n+1) + diphosphate. DNA-dependent RNA polymerase (RNAP) catalyzes the transcription of DNA into RNA using the four ribonucleoside triphosphates as substrates. Forms part of the jaw domain. The polypeptide is DNA-directed RNA polymerase subunit Rpo1C (Saccharolobus islandicus (strain Y.N.15.51 / Yellowstone #2) (Sulfolobus islandicus)).